We begin with the raw amino-acid sequence, 174 residues long: Trypsin inhibitor BvTI (174 aa).

2 cysteine pairs are disulfide-bonded: cysteine 41–cysteine 84 and cysteine 131–cysteine 138.

This sequence belongs to the protease inhibitor I3 (leguminous Kunitz-type inhibitor) family.

The protein resides in the secreted. In terms of biological role, inhibits bovine trypsin and chymotrypsin, and human plasmin, plasma kallikrein and factor XIIa. The protein is Trypsin inhibitor BvTI of Bauhinia variegata (Purple orchid tree).